Reading from the N-terminus, the 81-residue chain is MSHAVKIYDTCIGCTQCVRACPLDVLEMVPWDGCKAGQIASSPRTEDCVGCKRCETACPTDFLSIRVYLGDETTRSMGLAY.

4Fe-4S ferredoxin-type domains lie at 2 to 31 and 37 to 68; these read SHAV…MVPW and GQIA…IRVY. [4Fe-4S] cluster-binding residues include cysteine 11, cysteine 14, cysteine 17, cysteine 21, cysteine 48, cysteine 51, cysteine 54, and cysteine 58.

In terms of assembly, the cyanobacterial PSI reaction center is composed of one copy each of PsaA,B,C,D,E,F,I,J,K,L,M and X, and forms trimeric complexes. [4Fe-4S] cluster is required as a cofactor.

The protein localises to the cellular thylakoid membrane. The catalysed reaction is reduced [plastocyanin] + hnu + oxidized [2Fe-2S]-[ferredoxin] = oxidized [plastocyanin] + reduced [2Fe-2S]-[ferredoxin]. Apoprotein for the two 4Fe-4S centers FA and FB of photosystem I (PSI); essential for photochemical activity. FB is the terminal electron acceptor of PSI, donating electrons to ferredoxin. The C-terminus interacts with PsaA/B/D and helps assemble the protein into the PSI complex. Required for binding of PsaD and PsaE to PSI. PSI is a plastocyanin/cytochrome c6-ferredoxin oxidoreductase, converting photonic excitation into a charge separation, which transfers an electron from the donor P700 chlorophyll pair to the spectroscopically characterized acceptors A0, A1, FX, FA and FB in turn. This Synechococcus sp. (strain WH8103) protein is Photosystem I iron-sulfur center.